A 413-amino-acid polypeptide reads, in one-letter code: Multidrug resistance protein MdtA (413 aa).

An N-terminal signal peptide occupies residues 1–20 (MKGSNTFRWAIAIGVVVAAA). Disordered stretches follow at residues 31–57 (SPTA…RDGP) and 391–413 (EPQT…GARA). Over residues 397–413 (ADEKSPSRHEGQKGARA) the composition is skewed to basic and acidic residues.

Belongs to the membrane fusion protein (MFP) (TC 8.A.1) family. In terms of assembly, part of a tripartite efflux system composed of MdtA, MdtB and MdtC.

The protein localises to the cell inner membrane. The sequence is that of Multidrug resistance protein MdtA from Salmonella typhimurium (strain LT2 / SGSC1412 / ATCC 700720).